A 281-amino-acid chain; its full sequence is Very long chain fatty acid elongase 7 (281 aa).

Alanine 2 carries the post-translational modification N-acetylalanine. At 2–27 the chain is on the lumenal side; it reads AFSDLTSRTVHLYDNWIKDADPRVED. Residues 28 to 48 traverse the membrane as a helical segment; that stretch reads WLLMSSPLPQTILLGFYVYFV. The Cytoplasmic segment spans residues 49–72; the sequence is TSLGPKLMENRKPFELKKAMITYN. A helical membrane pass occupies residues 73 to 93; it reads FFIVLFSVYMCYEFVMSGWGI. Over 94–115 the chain is Lumenal; it reads GYSFRCDIVDYSRSPTALRMAR. Cysteine 99 and cysteine 231 are joined by a disulfide. The chain crosses the membrane as a helical span at residues 116 to 136; that stretch reads TCWLYYFSKFIELLDTIFFVL. 3-oxoeicosanoyl-CoA contacts are provided by lysine 124, arginine 137, lysine 139, glutamine 142, and histidine 147. At 137-142 the chain is on the cytoplasmic side; sequence RKKNSQ. The helical transmembrane segment at 143–162 threads the bilayer; the sequence is VTFLHVFHHTIMPWTWWFGV. Positions 147 to 151 match the HxxHH motif motif; the sequence is HVFHH. Residue histidine 150 is the Nucleophile of the active site. At 163-171 the chain is on the lumenal side; the sequence is KFAAGGLGT. The helical transmembrane segment at 172 to 194 threads the bilayer; it reads FHALLNTAVHVVMYSYYGLSALG. Residues tyrosine 187, lysine 204, threonine 208, and glutamine 211 each coordinate 3-oxoeicosanoyl-CoA. The Cytoplasmic portion of the chain corresponds to 195–206; that stretch reads PAYQKYLWWKKY. Residues 207-227 form a helical membrane-spanning segment; that stretch reads LTSLQLVQFVIVAIHISQFFF. The Lumenal segment spans residues 228–236; that stretch reads MEDCKYQFP. A helical transmembrane segment spans residues 237 to 257; that stretch reads VFACIIMSYSFMFLLLFLHFW. The Cytoplasmic segment spans residues 258 to 281; sequence YRAYTKGQRLPKTVKNGTCKNKDN. Position 266 (arginine 266) interacts with 3-oxoeicosanoyl-CoA. Positions 277–281 match the Di-lysine motif motif; sequence KNKDN.

This sequence belongs to the ELO family. ELOVL7 subfamily. As to quaternary structure, homodimer. Interacts with TECR. As to expression, expressed in most tissues except heart and skeletal muscle.

It is found in the endoplasmic reticulum membrane. The enzyme catalyses a very-long-chain acyl-CoA + malonyl-CoA + H(+) = a very-long-chain 3-oxoacyl-CoA + CO2 + CoA. The catalysed reaction is eicosanoyl-CoA + malonyl-CoA + H(+) = 3-oxodocosanoyl-CoA + CO2 + CoA. It carries out the reaction (5Z,8Z,11Z,14Z)-eicosatetraenoyl-CoA + malonyl-CoA + H(+) = (7Z,10Z,13Z,16Z)-3-oxodocosatetraenoyl-CoA + CO2 + CoA. It catalyses the reaction (6Z,9Z,12Z)-octadecatrienoyl-CoA + malonyl-CoA + H(+) = (8Z,11Z,14Z)-3-oxoeicosatrienoyl-CoA + CO2 + CoA. The enzyme catalyses (9Z,12Z)-octadecadienoyl-CoA + malonyl-CoA + H(+) = (11Z,14Z)-3-oxoicosa-11,14-dienoyl-CoA + CO2 + CoA. The catalysed reaction is (9Z)-octadecenoyl-CoA + malonyl-CoA + H(+) = 3-oxo-(11Z)-eicosenoyl-CoA + CO2 + CoA. It carries out the reaction octadecanoyl-CoA + malonyl-CoA + H(+) = 3-oxoeicosanoyl-CoA + CO2 + CoA. It catalyses the reaction hexadecanoyl-CoA + malonyl-CoA + H(+) = 3-oxooctadecanoyl-CoA + CO2 + CoA. The enzyme catalyses (9Z,12Z,15Z)-octadecatrienoyl-CoA + malonyl-CoA + H(+) = (11Z,14Z,17Z)-3-oxoeicosatrienoyl-CoA + CO2 + CoA. Its pathway is lipid metabolism; fatty acid biosynthesis. In terms of biological role, catalyzes the first and rate-limiting reaction of the four reactions that constitute the long-chain fatty acids elongation cycle. This endoplasmic reticulum-bound enzymatic process allows the addition of 2 carbons to the chain of long- and very long-chain fatty acids (VLCFAs) per cycle. Condensing enzyme with higher activity toward C18 acyl-CoAs, especially C18:3(n-3) acyl-CoAs and C18:3(n-6)-CoAs. Also active toward C20:4-, C18:0-, C18:1-, C18:2- and C16:0-CoAs, and weakly toward C20:0-CoA. Little or no activity toward C22:0-, C24:0-, or C26:0-CoAs. May participate in the production of saturated and polyunsaturated VLCFAs of different chain lengths that are involved in multiple biological processes as precursors of membrane lipids and lipid mediators. The polypeptide is Very long chain fatty acid elongase 7 (Homo sapiens (Human)).